A 277-amino-acid polypeptide reads, in one-letter code: MENTENSVDSKSIKNSEPKIIHGSKSVDSGISLDNSYKMDYPEMGLCIIINNKNFHKSTGMASRSGTDVDAANLRETFMNLKYEVRNKNDLTREEIVELMRNVSKEDHSKRSSFVCVLLSHGEEGIIFGTNGPVDLKKITSFFRGDCCRSLTGKPKLFIIQACRGTELDCGIETDSGVDDDMACHKIPVEADFLYAYSTAPGYYSWRNSRDGSWFIQSLCAMLKQYAHKLEFMHILTRVNRKVATEFESSSFDATFHAKKQIPCIVSMLTKELYFYQ.

Residue M1 is modified to N-acetylmethionine. 2 consecutive propeptides follow at residues M1 to D9 and S10 to D28. The segment covering M1–S10 has biased composition (polar residues). The segment at M1–K25 is disordered. At K11 the chain carries N6-acetyllysine. Over residues K11–I20 the composition is skewed to basic and acidic residues. S26 carries the phosphoserine modification. Catalysis depends on residues H121 and C163. C163 is subject to S-nitrosocysteine; in inhibited form.

The protein belongs to the peptidase C14A family. Heterotetramer that consists of two anti-parallel arranged heterodimers, each one formed by a 17 kDa (p17) and a 12 kDa (p12) subunit. Interacts with BIRC6/bruce. Cleavage by granzyme B, caspase-6, caspase-8 and caspase-10 generates the two active subunits. Additional processing of the propeptides is likely due to the autocatalytic activity of the activated protease. Active heterodimers between the small subunit of caspase-7 protease and the large subunit of caspase-3 also occur and vice versa. In terms of processing, S-nitrosylated on its catalytic site cysteine in unstimulated cell lines and denitrosylated upon activation of the Fas apoptotic pathway, associated with an increase in intracellular caspase activity. Fas therefore activates caspase-3 not only by inducing the cleavage of the caspase zymogen to its active subunits, but also by stimulating the denitrosylation of its active site thiol. Post-translationally, ubiquitinated by BIRC6; this activity is inhibited by DIABLO/SMAC.

The protein localises to the cytoplasm. It carries out the reaction Strict requirement for an Asp residue at positions P1 and P4. It has a preferred cleavage sequence of Asp-Xaa-Xaa-Asp-|- with a hydrophobic amino-acid residue at P2 and a hydrophilic amino-acid residue at P3, although Val or Ala are also accepted at this position.. Its activity is regulated as follows. Inhibited by BIRC6; following inhibition of BIRC6-caspase binding by DIABLO/SMAC, BIRC6 is subjected to caspase cleavage, leading to an increase in active caspases. In terms of biological role, involved in the activation cascade of caspases responsible for apoptosis execution. At the onset of apoptosis, it proteolytically cleaves poly(ADP-ribose) polymerase PARP1 at a '216-Asp-|-Gly-217' bond. Cleaves and activates sterol regulatory element binding proteins (SREBPs) between the basic helix-loop-helix leucine zipper domain and the membrane attachment domain. Cleaves and activates caspase-6, -7 and -9 (CASP6, CASP7 and CASP9, respectively). Cleaves and inactivates interleukin-18 (IL18). Triggers cell adhesion in sympathetic neurons through RET cleavage. Cleaves IL-1 beta between an Asp and an Ala, releasing the mature cytokine which is involved in a variety of inflammatory processes. Cleaves and inhibits serine/threonine-protein kinase AKT1 in response to oxidative stress. Acts as an inhibitor of type I interferon production during virus-induced apoptosis by mediating cleavage of antiviral proteins CGAS, IRF3 and MAVS, thereby preventing cytokine overproduction. Also involved in pyroptosis by mediating cleavage and activation of gasdermin-E (GSDME). Cleaves XRCC4 and phospholipid scramblase proteins XKR4, XKR8 and XKR9, leading to promote phosphatidylserine exposure on apoptotic cell surface. Cleaves BIRC6 following inhibition of BIRC6-caspase binding by DIABLO/SMAC. The sequence is that of Caspase-3 (CASP3) from Saimiri boliviensis boliviensis (Bolivian squirrel monkey).